The sequence spans 874 residues: MEVLREKVEEEEEAEREEAAEWAEWARMEKMMRPVEVRKEEITLKQETLRDLEKKLSEIQITVSAELPAFTKDTIDISKLPISYKTNTPKEEHLLQVADNFSRQYSHLCPDRVPLFLHPLNECEVPKFVSTTLRPTLMPYPELYNWDSCAQFVSDFLTMVPLPDPLKPPSHLYSSTTVLKYQKGNCFDFSTLLCSMLIGSGYDAYCVNGYGSLDLCHMDLTREVCPLTVKPKETIKKEEKVLPKKYTIKPPRDLCSRFEQEQEVKKQQEIRAQEKKRLREEEERLMEAEKAKPDALHGLRVHSWVLVLSGKREVPENFFIDPFTGHSYSTQDEHFLGIESLWNHKNYWINMQDCWNCCKDLIFDLGDPVRWEYMLLGTDKSQLSLTEEDDSGINDEDDVENLGKEDEDKSFDMPHSWVEQIEISPEAFETRCPNGKKVIQYKRAKLEKWAPYLNSNGLVSRLTTYEDLQCTNILEIKEWYQNREDMLELKHINKTTDLKTDYFKPGHPQALRVHSYKSMQPEMDRVIEFYETARVDGLMKREETPRTMTEYYQGRPDFLSYRHASFGPRVKKLTLSSAESNPRPIVKITERFFRNPAKPAEEDVAERVFLVAEERIQLRYHCREDHITASKREFLRRTEVDSKGNKIIMTPDMCISFEVEPMEHTKKLLYQYEAMMHLKREEKLSRHQVWESELEVLEILKLREEEEAAHTLTISIYDTKRNEKSKEYREAMERMMHEEHLRQVETQLDYLAPFLAQLPPGEKLTCWQAVRLKDECLSDFKQRLINKANLIQARFEKETQELQKKQQWYQENQVTLTPEDEDLYLSYCSQAMFRIRILEQRLNRHKELAPLKYLALEEKLYKDPRLGELQKIFA.

Coiled coils occupy residues 1–67 (MEVL…SAEL) and 257–297 (RFEQ…DALH). Residues 386-400 (TEEDDSGINDEDDVE) are compositionally biased toward acidic residues. Positions 386–410 (TEEDDSGINDEDDVENLGKEDEDKS) are disordered. The span at 401–410 (NLGKEDEDKS) shows a compositional bias: basic and acidic residues. Coiled-coil stretches lie at residues 688–711 (QVWE…AAHT) and 781–807 (KQRL…KKQQ).

Belongs to the DRC7 family. In terms of assembly, component of the nexin-dynein regulatory complex (N-DRC). Interacts with TCTE1/DRC5. Interacts with DRC3 and GAS8/DRC4.

Its subcellular location is the cell projection. It localises to the cilium. It is found in the flagellum. The protein resides in the cytoplasm. The protein localises to the cytoskeleton. Its subcellular location is the cilium axoneme. It localises to the flagellum axoneme. Functionally, component of the nexin-dynein regulatory complex (N-DRC) a key regulator of ciliary/flagellar motility which maintains the alignment and integrity of the distal axoneme and regulates microtubule sliding in motile axonemes. Involved in the regulation of flagellar motility. Essential for male fertility, sperm head morphogenesis and sperm flagellum formation. This Homo sapiens (Human) protein is Dynein regulatory complex subunit 7 (DRC7).